We begin with the raw amino-acid sequence, 67 residues long: Cold shock-like protein CspE (67 aa).

Positions 5–64 constitute a CSD domain; that stretch reads GKVKWFNSEKGFGFIEVEGGNDVFVHFSAITGDGFKSLDEGQEVSFEVEDGNRGPQAKNV.

In terms of assembly, homodimer.

The protein localises to the cytoplasm. In terms of biological role, can bind to ATTGG and CCAAT motifs (Y-box motifs) of single-stranded oligonucleotides. This is Cold shock-like protein CspE (cspE) from Bacillus anthracis.